A 299-amino-acid polypeptide reads, in one-letter code: Protein bem46 (299 aa).

Residues 15 to 32 (YSGMASLAVTLIALGFLY) traverse the membrane as a helical segment.

The protein belongs to the serine esterase family.

It localises to the membrane. Its function is as follows. Suppressor of bem1/bud5. The sequence is that of Protein bem46 (bem46) from Schizosaccharomyces pombe (strain 972 / ATCC 24843) (Fission yeast).